Here is a 535-residue protein sequence, read N- to C-terminus: CTP synthase (535 aa).

The amidoligase domain stretch occupies residues 1–267 (MTKYIFVTGG…DQIVCDHLKL (267 aa)). Ser-13 contacts CTP. A UTP-binding site is contributed by Ser-13. 14-19 (SLGKGI) contributes to the ATP binding site. Tyr-54 is a binding site for L-glutamine. Asp-71 is an ATP binding site. Positions 71 and 141 each coordinate Mg(2+). CTP contacts are provided by residues 148 to 150 (DIE), 188 to 193 (KTKPTQ), and Lys-224. UTP-binding positions include 188–193 (KTKPTQ) and Lys-224. 240–242 (RDA) provides a ligand contact to ATP. The 243-residue stretch at 292–534 (KIALVGKYVE…VRASITNKES (243 aa)) folds into the Glutamine amidotransferase type-1 domain. Gly-354 lines the L-glutamine pocket. The active-site Nucleophile; for glutamine hydrolysis is Cys-381. L-glutamine-binding positions include 382-385 (LGMQ), Glu-405, and Arg-462. Catalysis depends on residues His-507 and Glu-509.

It belongs to the CTP synthase family. In terms of assembly, homotetramer.

The enzyme catalyses UTP + L-glutamine + ATP + H2O = CTP + L-glutamate + ADP + phosphate + 2 H(+). It catalyses the reaction L-glutamine + H2O = L-glutamate + NH4(+). The catalysed reaction is UTP + NH4(+) + ATP = CTP + ADP + phosphate + 2 H(+). Its pathway is pyrimidine metabolism; CTP biosynthesis via de novo pathway; CTP from UDP: step 2/2. Allosterically activated by GTP, when glutamine is the substrate; GTP has no effect on the reaction when ammonia is the substrate. The allosteric effector GTP functions by stabilizing the protein conformation that binds the tetrahedral intermediate(s) formed during glutamine hydrolysis. Inhibited by the product CTP, via allosteric rather than competitive inhibition. In terms of biological role, catalyzes the ATP-dependent amination of UTP to CTP with either L-glutamine or ammonia as the source of nitrogen. Regulates intracellular CTP levels through interactions with the four ribonucleotide triphosphates. The sequence is that of CTP synthase from Bacillus cereus (strain AH187).